Here is a 429-residue protein sequence, read N- to C-terminus: Ribosomal RNA small subunit methyltransferase B (429 aa).

Residues 254 to 260 (CAAPGGK), D277, D303, and D322 each bind S-adenosyl-L-methionine. Residue C375 is the Nucleophile of the active site.

Belongs to the class I-like SAM-binding methyltransferase superfamily. RsmB/NOP family.

It localises to the cytoplasm. It carries out the reaction cytidine(967) in 16S rRNA + S-adenosyl-L-methionine = 5-methylcytidine(967) in 16S rRNA + S-adenosyl-L-homocysteine + H(+). In terms of biological role, specifically methylates the cytosine at position 967 (m5C967) of 16S rRNA. The protein is Ribosomal RNA small subunit methyltransferase B of Shigella boydii serotype 4 (strain Sb227).